The following is a 201-amino-acid chain: UPF0376 protein F10G2.1 (201 aa).

Residues 1-3 lie on the Cytoplasmic side of the membrane; sequence MKH. Residues 4–24 traverse the membrane as a helical; Signal-anchor for type II membrane protein segment; sequence FLLLAIIGILFLGSTYGASVA. The Extracellular portion of the chain corresponds to 25–201; that stretch reads TEKLKASNCT…LLECDFRNIQ (177 aa). 2 N-linked (GlcNAc...) asparagine glycosylation sites follow: N32 and N124.

This sequence belongs to the UPF0376 family.

It is found in the membrane. The chain is UPF0376 protein F10G2.1 from Caenorhabditis elegans.